The following is a 146-amino-acid chain: ASFDPHEKQLIGDLWHKVDVAHCGGEALSRMLIVYPWKRRYFENFGDISNAQAIMHNEKVQAHGKKVLASFGEAVCHLDGIRAHFANLSKLHCEKLHVDPENFKLLGDIIIIVLAAHYPKDFGLECHAAYQKLVRQVAAALAAEYH.

Ala-1 bears the N-acetylalanine mark. Residues 2 to 146 (SFDPHEKQLI…VAAALAAEYH (145 aa)) form the Globin domain. His-63 and His-92 together coordinate heme b.

It belongs to the globin family. In terms of assembly, heterotetramer of two alpha chains and two beta chains. As to expression, red blood cells.

Involved in oxygen transport from the lung to the various peripheral tissues. The sequence is that of Hemoglobin subunit beta (HBB) from Crocodylus niloticus (Nile crocodile).